Here is a 297-residue protein sequence, read N- to C-terminus: UDP-N-acetylenolpyruvoylglucosamine reductase (297 aa).

The 167-residue stretch at 18–184 (QVGGPAEWYL…LSARLRLAPG (167 aa)) folds into the FAD-binding PCMH-type domain. Arginine 163 is an active-site residue. Serine 214 (proton donor) is an active-site residue. Glutamate 285 is a catalytic residue.

It depends on FAD as a cofactor.

Its subcellular location is the cytoplasm. The enzyme catalyses UDP-N-acetyl-alpha-D-muramate + NADP(+) = UDP-N-acetyl-3-O-(1-carboxyvinyl)-alpha-D-glucosamine + NADPH + H(+). It functions in the pathway cell wall biogenesis; peptidoglycan biosynthesis. Functionally, cell wall formation. The chain is UDP-N-acetylenolpyruvoylglucosamine reductase from Gloeobacter violaceus (strain ATCC 29082 / PCC 7421).